Consider the following 352-residue polypeptide: Speedy protein E16 (352 aa).

Residues 1–90 are disordered; that stretch reads MDRTETRFRK…EPEKELAPEP (90 aa). Over residues 18–40 the composition is skewed to polar residues; it reads ITTSRQPHPQNEQSPQRSTSGYS. Over residues 76–90 the composition is skewed to acidic residues; sequence DESEEEPEKELAPEP.

Belongs to the Speedy/Ringo family.

The protein is Speedy protein E16 of Homo sapiens (Human).